We begin with the raw amino-acid sequence, 368 residues long: N-acetylneuraminate epimerase (368 aa).

Residues 1-19 form the signal peptide; that stretch reads MNKTITALAIMMASFAANA. Kelch repeat units lie at residues 40–84, 86–137, 139–173, 174–219, 222–265, 287–336, and 338–367; these read TVYI…AFID, NLYV…FVHN, KAYVTGGVNQNIFNGYFEDLNEAGKDSATIDKINA, HYFD…VNKG, TWLI…VAGG, ENYQ…PWNN, and LLIIGGETAGGKAVTDSVLISVKDNKVTVQ. Glutamate 228 functions as the Proton acceptor in the catalytic mechanism.

Belongs to the NanM family. In terms of assembly, homodimer.

It localises to the periplasm. It catalyses the reaction N-acetyl-alpha-neuraminate = N-acetyl-beta-neuraminate. Its function is as follows. Converts alpha-N-acetylneuranimic acid (Neu5Ac) to the beta-anomer, accelerating the equilibrium between the alpha- and beta-anomers. Probably facilitates sialidase-negative bacteria to compete successfully for limited amounts of extracellular Neu5Ac, which is likely taken up in the beta-anomer. In addition, the rapid removal of sialic acid from solution might be advantageous to the bacterium to damp down host responses. This is N-acetylneuraminate epimerase from Escherichia coli O9:H4 (strain HS).